Reading from the N-terminus, the 182-residue chain is D-lyxose ketol-isomerase (182 aa).

Mn(2+) is bound by residues histidine 74, histidine 76, glutamate 87, and histidine 142.

It belongs to the D-lyxose ketol-isomerase family. As to quaternary structure, homodimer. It depends on Mn(2+) as a cofactor.

The catalysed reaction is D-lyxose = D-xylulose. Sugar isomerase that catalyzes the reversible isomerization of D-lyxose to D-xylulose. Shows weak activity with D-mannose and L-ribose. This is D-lyxose ketol-isomerase from Cohnella laeviribosi.